We begin with the raw amino-acid sequence, 161 residues long: Dihydrofolate reductase (161 aa).

The region spanning 2-161 (NISLIAAISK…YNYSFEILSR (160 aa)) is the DHFR domain. Residue 6 to 8 (IAA) participates in substrate binding. Residues 7-8 (AA) and 15-20 (IGYKNK) contribute to the NADP(+) site. A substrate-binding site is contributed by D28. Position 44-47 (44-47 (GRLT)) interacts with NADP(+). R59 contacts substrate. NADP(+) is bound by residues 64-66 (ISS) and 96-101 (IGGAKI). T115 lines the substrate pocket.

The protein belongs to the dihydrofolate reductase family.

The catalysed reaction is (6S)-5,6,7,8-tetrahydrofolate + NADP(+) = 7,8-dihydrofolate + NADPH + H(+). It functions in the pathway cofactor biosynthesis; tetrahydrofolate biosynthesis; 5,6,7,8-tetrahydrofolate from 7,8-dihydrofolate: step 1/1. Functionally, key enzyme in folate metabolism. Catalyzes an essential reaction for de novo glycine and purine synthesis, and for DNA precursor synthesis. The sequence is that of Dihydrofolate reductase (folA) from Buchnera aphidicola subsp. Acyrthosiphon pisum (strain APS) (Acyrthosiphon pisum symbiotic bacterium).